Here is a 263-residue protein sequence, read N- to C-terminus: Oxidoreductase UcpA (263 aa).

Position 10–32 (10–32) interacts with NAD(+); the sequence is LITGALQGIGEGIARTFARHGAN. Position 141 (serine 141) interacts with substrate. The active-site Proton acceptor is the tyrosine 155.

It belongs to the short-chain dehydrogenases/reductases (SDR) family.

The sequence is that of Oxidoreductase UcpA (ucpA) from Escherichia coli (strain K12).